The sequence spans 113 residues: U11-theraphotoxin-Hhn1a (113 aa).

The signal sequence occupies residues 1-21 (MNTVRVTFLLVFVLPVSLGQA). Positions 22-74 (DKDENRMEMQEKTEQGKSYLDFAENLLLQKLEELEAKLLEEDSEESRNSRQKR) are excised as a propeptide. Positions 60–69 (LEEDSEESRN) are enriched in basic and acidic residues. The interval 60 to 83 (LEEDSEESRNSRQKRCIGEGVPCD) is disordered. Cystine bridges form between Cys-75–Cys-90, Cys-82–Cys-95, and Cys-89–Cys-110.

This sequence belongs to the neurotoxin 14 (magi-1) family. 01 (HNTX-16) subfamily. In terms of tissue distribution, expressed by the venom gland.

It is found in the secreted. Functionally, probable ion channel inhibitor. The polypeptide is U11-theraphotoxin-Hhn1a (Cyriopagopus hainanus (Chinese bird spider)).